The sequence spans 340 residues: Aldose 1-epimerase (340 aa).

Residue Arg77 participates in substrate binding. The active-site Proton donor is His172. Asp243 serves as a coordination point for substrate. Glu305 (proton acceptor) is an active-site residue.

This sequence belongs to the aldose epimerase family.

It is found in the cytoplasm. The catalysed reaction is alpha-D-glucose = beta-D-glucose. The protein operates within carbohydrate metabolism; hexose metabolism. Mutarotase converts alpha-aldose to the beta-anomer. It is active on D-glucose, L-arabinose, D-xylose, D-galactose, maltose and lactose. This Haemophilus influenzae (strain ATCC 51907 / DSM 11121 / KW20 / Rd) protein is Aldose 1-epimerase (galM).